The following is a 206-amino-acid chain: Small ribosomal subunit protein uS4 (206 aa).

Positions 96-156 constitute an S4 RNA-binding domain; sequence QRLDNVVYRM…EKSKTQARII (61 aa).

The protein belongs to the universal ribosomal protein uS4 family. As to quaternary structure, part of the 30S ribosomal subunit. Contacts protein S5. The interaction surface between S4 and S5 is involved in control of translational fidelity.

Its function is as follows. One of the primary rRNA binding proteins, it binds directly to 16S rRNA where it nucleates assembly of the body of the 30S subunit. Functionally, with S5 and S12 plays an important role in translational accuracy. The chain is Small ribosomal subunit protein uS4 from Pseudoalteromonas translucida (strain TAC 125).